Consider the following 244-residue polypeptide: 1-(5-phosphoribosyl)-5-[(5-phosphoribosylamino)methylideneamino] imidazole-4-carboxamide isomerase (244 aa).

The active-site Proton acceptor is aspartate 10. The active-site Proton donor is the aspartate 132.

The protein belongs to the HisA/HisF family.

It is found in the cytoplasm. The enzyme catalyses 1-(5-phospho-beta-D-ribosyl)-5-[(5-phospho-beta-D-ribosylamino)methylideneamino]imidazole-4-carboxamide = 5-[(5-phospho-1-deoxy-D-ribulos-1-ylimino)methylamino]-1-(5-phospho-beta-D-ribosyl)imidazole-4-carboxamide. The protein operates within amino-acid biosynthesis; L-histidine biosynthesis; L-histidine from 5-phospho-alpha-D-ribose 1-diphosphate: step 4/9. This Xanthomonas oryzae pv. oryzae (strain MAFF 311018) protein is 1-(5-phosphoribosyl)-5-[(5-phosphoribosylamino)methylideneamino] imidazole-4-carboxamide isomerase.